A 430-amino-acid chain; its full sequence is Glutamyl-tRNA reductase (430 aa).

Residues T50–R53, S108, E113–Q115, and Q119 each bind substrate. C51 serves as the catalytic Nucleophile. G188–A193 serves as a coordination point for NADP(+).

This sequence belongs to the glutamyl-tRNA reductase family. As to quaternary structure, homodimer.

It catalyses the reaction (S)-4-amino-5-oxopentanoate + tRNA(Glu) + NADP(+) = L-glutamyl-tRNA(Glu) + NADPH + H(+). It functions in the pathway porphyrin-containing compound metabolism; protoporphyrin-IX biosynthesis; 5-aminolevulinate from L-glutamyl-tRNA(Glu): step 1/2. Catalyzes the NADPH-dependent reduction of glutamyl-tRNA(Glu) to glutamate 1-semialdehyde (GSA). The protein is Glutamyl-tRNA reductase of Lawsonia intracellularis (strain PHE/MN1-00).